The sequence spans 217 residues: Small ribosomal subunit protein uS3 (217 aa).

The 69-residue stretch at 38–106 folds into the KH type-2 domain; that stretch reads IRKFVQKELA…QVHINIIEIK (69 aa).

The protein belongs to the universal ribosomal protein uS3 family. As to quaternary structure, part of the 30S ribosomal subunit. Forms a tight complex with proteins S10 and S14.

Binds the lower part of the 30S subunit head. Binds mRNA in the 70S ribosome, positioning it for translation. This is Small ribosomal subunit protein uS3 from Streptococcus pneumoniae serotype 19F (strain G54).